The sequence spans 367 residues: tRNA 2-selenouridine synthase (367 aa).

The Rhodanese domain occupies 14–137 (FLNDVPLMDV…LRRFLIDSLE (124 aa)). Cys-97 serves as the catalytic S-selanylcysteine intermediate.

It belongs to the SelU family. As to quaternary structure, monomer.

The enzyme catalyses 5-methylaminomethyl-2-thiouridine(34) in tRNA + selenophosphate + (2E)-geranyl diphosphate + H2O + H(+) = 5-methylaminomethyl-2-selenouridine(34) in tRNA + (2E)-thiogeraniol + phosphate + diphosphate. The catalysed reaction is 5-methylaminomethyl-2-thiouridine(34) in tRNA + (2E)-geranyl diphosphate = 5-methylaminomethyl-S-(2E)-geranyl-thiouridine(34) in tRNA + diphosphate. It catalyses the reaction 5-methylaminomethyl-S-(2E)-geranyl-thiouridine(34) in tRNA + selenophosphate + H(+) = 5-methylaminomethyl-2-(Se-phospho)selenouridine(34) in tRNA + (2E)-thiogeraniol. It carries out the reaction 5-methylaminomethyl-2-(Se-phospho)selenouridine(34) in tRNA + H2O = 5-methylaminomethyl-2-selenouridine(34) in tRNA + phosphate. Its function is as follows. Involved in the post-transcriptional modification of the uridine at the wobble position (U34) of tRNA(Lys), tRNA(Glu) and tRNA(Gln). Catalyzes the conversion of 2-thiouridine (S2U-RNA) to 2-selenouridine (Se2U-RNA). Acts in a two-step process involving geranylation of 2-thiouridine (S2U) to S-geranyl-2-thiouridine (geS2U) and subsequent selenation of the latter derivative to 2-selenouridine (Se2U) in the tRNA chain. The chain is tRNA 2-selenouridine synthase from Marinobacter nauticus (strain ATCC 700491 / DSM 11845 / VT8) (Marinobacter aquaeolei).